Reading from the N-terminus, the 331-residue chain is Probable tRNA pseudouridine synthase B (331 aa).

Over residues Met1–Pro15 the composition is skewed to basic and acidic residues. A disordered region spans residues Met1 to Arg27. The active-site Nucleophile is the Asp71. A PUA domain is found at Leu238–Met313.

Belongs to the pseudouridine synthase TruB family. Type 2 subfamily.

It catalyses the reaction uridine(55) in tRNA = pseudouridine(55) in tRNA. Its function is as follows. Could be responsible for synthesis of pseudouridine from uracil-55 in the psi GC loop of transfer RNAs. This Pyrobaculum arsenaticum (strain DSM 13514 / JCM 11321 / PZ6) protein is Probable tRNA pseudouridine synthase B.